Consider the following 208-residue polypeptide: RxLR effector protein Avr1 (208 aa).

The N-terminal stretch at 1–22 (MGLMHRVLLLATFALLCMHAKA) is a signal peptide. The RxLR-dEER signature appears at 41–54 (RQLRTATMSDDEAR). Positions 70 to 92 (KIESWIQNKVTDDFVLSELKLVR) are W1-motif. The interval 93–110 (LPGTSLADDPNFKLFQKF) is linker region ln1. The W2-motif stretch occupies residues 111–136 (KIGGWLEEKATTTKAWENLGLDSLPF). A Y-motif region spans residues 137-157 (DQVSKIDEFKTYTQYVTVLNK). Residues 158–170 (KASKLDIDQWHGL) are linker region ln2. The interval 170-208 (LLSGGSPEELMAKAMILRTLGRDVLERRVMLGGHVVVPF) is T-region.

Belongs to the RxLR effector family. In terms of assembly, interacts with host exocyst component Sec5.

Its subcellular location is the secreted. The protein resides in the host cytoplasm. The protein localises to the host nucleus. It is found in the host peroxisome. Its function is as follows. Secreted effector that acts as an elicitor of hypersensitive response (HR) specifically on plants carrying defense protein R1, through its interaction with this protein. Also acts as a virulence factor that promotes colonization and suppresses cell death induced by CRN2 as well as callose deposition, a hallmark of basal defense. Interacts with host exocyst component Sec5 and thereby disturbs vesicle trafficking, a cellular process that is important for basal defense. By targeting and stabilizing Sec5 in the cytoplasm, the exocyst complex is thus out of balance and not able to mediate the focal secretion of PR-1 and callose. The chain is RxLR effector protein Avr1 from Phytophthora infestans (strain T30-4) (Potato late blight agent).